The following is a 216-amino-acid chain: Soluble inorganic pyrophosphatase 3 (216 aa).

Positions 1 to 10 (MSEEAYEETQ) are enriched in acidic residues. Residues 1-21 (MSEEAYEETQESSQSPRPVPK) form a disordered region. Residues K66 and R80 each contribute to the substrate site. The active-site Proton donor is the Y88. Residue Y92 participates in substrate binding. D102, D107, and D139 together coordinate Mg(2+). Y176 is a substrate binding site.

Belongs to the PPase family. Mg(2+) serves as cofactor. As to expression, expressed preferentially in stamen, pollen and flower, and at a low level in lateral roots and root elongation zones.

It localises to the cytoplasm. It carries out the reaction diphosphate + H2O = 2 phosphate + H(+). In Arabidopsis thaliana (Mouse-ear cress), this protein is Soluble inorganic pyrophosphatase 3.